The chain runs to 295 residues: Ethanolamine ammonia-lyase small subunit (295 aa).

2 residues coordinate adenosylcob(III)alamin: Val-209 and Glu-230.

Belongs to the EutC family. As to quaternary structure, the basic unit is a heterodimer which dimerizes to form tetramers. The heterotetramers trimerize; 6 large subunits form a core ring with 6 small subunits projecting outwards. Requires adenosylcob(III)alamin as cofactor.

The protein resides in the bacterial microcompartment. It catalyses the reaction ethanolamine = acetaldehyde + NH4(+). The protein operates within amine and polyamine degradation; ethanolamine degradation. Its function is as follows. Catalyzes the deamination of various vicinal amino-alcohols to oxo compounds. Allows this organism to utilize ethanolamine as the sole source of nitrogen and carbon in the presence of external vitamin B12. The sequence is that of Ethanolamine ammonia-lyase small subunit from Clostridium perfringens (strain ATCC 13124 / DSM 756 / JCM 1290 / NCIMB 6125 / NCTC 8237 / Type A).